The chain runs to 147 residues: MKVILLKDVKGKGKKGEVINASDGYARNFLLPRGLGEEATDSNMHILNRQKEAERKKKLEETEAAQALAESLRNKELKMIGKAGENGRLFGAITNKDIATELKKQFKVDIDKKKVVTETIKQLGEYEVELKLYPEISTKIKVIISEK.

Belongs to the bacterial ribosomal protein bL9 family.

Functionally, binds to the 23S rRNA. The sequence is that of Large ribosomal subunit protein bL9 from Clostridium novyi (strain NT).